Here is a 235-residue protein sequence, read N- to C-terminus: Small ribosomal subunit protein uS2 (235 aa).

It belongs to the universal ribosomal protein uS2 family.

The protein is Small ribosomal subunit protein uS2 of Thermoanaerobacter pseudethanolicus (strain ATCC 33223 / 39E) (Clostridium thermohydrosulfuricum).